We begin with the raw amino-acid sequence, 712 residues long: Polyribonucleotide nucleotidyltransferase (712 aa).

Aspartate 493 and aspartate 499 together coordinate Mg(2+). The region spanning 560–622 (PRLTKLTIDP…RDAEAAIERI (63 aa)) is the KH domain. Positions 632–700 (GEDYVGTVKG…DDGKMRLTRK (69 aa)) constitute an S1 motif domain.

This sequence belongs to the polyribonucleotide nucleotidyltransferase family. Mg(2+) is required as a cofactor.

Its subcellular location is the cytoplasm. The enzyme catalyses RNA(n+1) + phosphate = RNA(n) + a ribonucleoside 5'-diphosphate. Its function is as follows. Involved in mRNA degradation. Catalyzes the phosphorolysis of single-stranded polyribonucleotides processively in the 3'- to 5'-direction. This is Polyribonucleotide nucleotidyltransferase from Salinibacter ruber (strain DSM 13855 / M31).